The primary structure comprises 66 residues: Stress-associated endoplasmic reticulum protein 1 (66 aa).

A disordered region spans residues 1-31 (MVAKQRIRMANEKHSKNITQRGNVAKTSRNA). The span at 17–30 (NITQRGNVAKTSRN) shows a compositional bias: polar residues. Residues 39 to 59 (GPWLLALFIFVVCGSAIFQII) traverse the membrane as a helical segment.

It belongs to the RAMP4 family. In terms of assembly, interacts with SEC61B, SEC61A1 and the SEC61 complex. Interacts with CANX.

The protein localises to the membrane. It is found in the endoplasmic reticulum membrane. Functionally, interacts with target proteins during their translocation into the lumen of the endoplasmic reticulum. Protects unfolded target proteins against degradation during ER stress. May facilitate glycosylation of target proteins after termination of ER stress. May modulate the use of N-glycosylation sites on target proteins. This Bos taurus (Bovine) protein is Stress-associated endoplasmic reticulum protein 1 (SERP1).